Consider the following 672-residue polypeptide: Cytadherence high molecular weight protein 3 (672 aa).

25 consecutive repeat copies span residues 98 to 100, 106 to 108, 160 to 162, 197 to 199, 206 to 208, 211 to 213, 221 to 223, 226 to 228, 235 to 237, 249 to 251, 288 to 290, 310 to 319, 312 to 315, 316 to 318, 322 to 324, 330 to 339, 332 to 335, 336 to 338, 354 to 358, 385 to 389, 396 to 400, 402 to 404, 413 to 415, 424 to 428, and 454 to 456. The 9 X 3 AA repeats OF Y-D-Q stretch occupies residues 98–251; it reads YDQVNNTFYD…NAYNTQNYDQ (154 aa). The interval 160 to 456 is 8 X 3 AA repeats of P-V-V; the sequence is PVVDPDATPE…QTTPAVPPVV (297 aa). Residues 177 to 197 are disordered; the sequence is GLDPLPQAPDEYQDTTAPPAY. The interval 310–339 is 2 X 10 AA repeats of V-E-P-T-P-T-P-V-V-E; sequence VEPTPTPVVETAPVVEAPKVVEPTPTPVVE. Positions 312-428 are 6 X 5 AA repeats of P-X-P-X-P; that stretch reads PTPTPVVETA…PKVVTPTPAP (117 aa).

It is found in the cell projection. The protein localises to the attachment organelle membrane. Functionally, component of the cytoskeleton-like structure which stabilizes the shape of the wall-less mycoplasma. This cytoskeleton-like network of accessory proteins containing HMW proteins 1 to 5 allows the proper anchoring of cytadhesin proteins in the mycoplasmal membrane at the attachment organelle. Essential for successful surface parasitism. The polypeptide is Cytadherence high molecular weight protein 3 (hmw3) (Mycoplasma pneumoniae (strain ATCC 29342 / M129 / Subtype 1) (Mycoplasmoides pneumoniae)).